Consider the following 83-residue polypeptide: Putative defensin-like protein 150 (83 aa).

The first 25 residues, 1 to 25 (MMGKHIQLSFAILIMFTIFVLGAVG), serve as a signal peptide directing secretion. 4 disulfides stabilise this stretch: Cys35/Cys83, Cys44/Cys64, Cys49/Cys77, and Cys53/Cys79.

The protein belongs to the DEFL family.

Its subcellular location is the secreted. The protein is Putative defensin-like protein 150 (LCR32) of Arabidopsis thaliana (Mouse-ear cress).